The primary structure comprises 1876 residues: 1,3-beta-glucan synthase component FKS1 (1876 aa).

2 stretches are compositionally biased toward polar residues: residues 1 to 25 (MNTD…QSQE) and 60 to 71 (QPPNESYDQDYT). The tract at residues 1–108 (MNTDQQPYQG…PGTPGYDSYG (108 aa)) is disordered. At 1–454 (MNTDQQPYQG…WLHLVTNFNR (454 aa)) the chain is on the cytoplasmic side. Lys259 participates in a covalent cross-link: Glycyl lysine isopeptide (Lys-Gly) (interchain with G-Cter in ubiquitin). Phosphothreonine occurs at positions 269 and 272. Residues Lys275 and Lys386 each participate in a glycyl lysine isopeptide (Lys-Gly) (interchain with G-Cter in ubiquitin) cross-link. The helical transmembrane segment at 455 to 475 (IWVMHISIFWMYFAYNSPTFY) threads the bilayer. Residues 476-492 (THNYQQLVDNQPLAAYK) lie on the Extracellular side of the membrane. The helical transmembrane segment at 493–513 (WASCALGGTVASLIQIVATLC) threads the bilayer. Topologically, residues 514–531 (EWSFVPRKWAGAQHLSRR) are cytoplasmic. Residues 532–552 (FWFLCIIFGINLGPIIFVFAY) form a helical membrane-spanning segment. At 553 to 563 (DKDTVYSTAAH) the chain is on the extracellular side. A helical transmembrane segment spans residues 564–584 (VVAAVMFFVAVATIIFFSIMP). The Cytoplasmic segment spans residues 585–621 (LGGLFTSYMKKSTRRYVASQTFTAAFAPLHGLDRWMS). The chain crosses the membrane as a helical span at residues 622–642 (YLVWVTVFAAKYSESYYFLVL). Over 643-678 (SLRDPIRILSTTAMRCTGEYWWGAVLCKVQPKIVLG) the chain is Extracellular. Residues 679-699 (LVIATDFILFFLDTYLWYIIV) traverse the membrane as a helical segment. Topologically, residues 700–1358 (NTIFSVGKSF…QPAVDWVRRY (659 aa)) are cytoplasmic. Glycyl lysine isopeptide (Lys-Gly) (interchain with G-Cter in ubiquitin) cross-links involve residues Lys910 and Lys915. A helical transmembrane segment spans residues 1359–1379 (TLSIFIVFWIAFVPIVVQELI). Over 1380–1444 (ERGLWKATQR…RIPFSILYSR (65 aa)) the chain is Extracellular. A helical transmembrane segment spans residues 1445–1465 (FAGSAIYMGARSMLMLLFGTV). Topologically, residues 1466 to 1469 (AHWQ) are cytoplasmic. The chain crosses the membrane as a helical span at residues 1470 to 1490 (APLLWFWASLSSLIFAPFVFN). At 1491–1560 (PHQFAWEDFF…DASRAHRTNL (70 aa)) the chain is on the extracellular side. Glycyl lysine isopeptide (Lys-Gly) (interchain with G-Cter in ubiquitin) cross-links involve residues Lys1539 and Lys1547. The helical transmembrane segment at 1561–1581 (IMAEIIPCAIYAAGCFIAFTF) threads the bilayer. Residues 1582–1601 (INAQTGVKTTDDDRVNSVLR) are Cytoplasmic-facing. The helical transmembrane segment at 1602 to 1622 (IIICTLAPIAVNLGVLFFCMG) threads the bilayer. The Extracellular portion of the chain corresponds to 1623 to 1643 (MSCCSGPLFGMCCKKTGSVMA). The helical transmembrane segment at 1644-1664 (GIAHGVAVIVHIAFFIVMWVL) threads the bilayer. The Cytoplasmic segment spans residues 1665–1672 (ESFNFVRM). The chain crosses the membrane as a helical span at residues 1673–1695 (LIGVVTCIQCQRLIFHCMTALML). Residues 1696-1802 (TREFKNDHAN…RKRMVKKYCS (107 aa)) lie on the Extracellular side of the membrane. The helical transmembrane segment at 1803-1823 (LYFLVLAIFAGCIIGPAVASA) threads the bilayer. At 1824-1876 (KIHKHIGDSLDGVVHNLFQPINTTNNDTGSQMSTYQSHYYTHTPSLKTWSTIK) the chain is on the cytoplasmic side.

Belongs to the glycosyltransferase 48 family. As to quaternary structure, component of the 1,3-beta-glucan synthase (GS) complex, composed of two alternate catalytic subunits FKS1 or GSC2, and a regulatory subunit RHO1. Interacts with RHO1, which is a GTP-binding protein.

It localises to the mitochondrion. It is found in the cell membrane. It carries out the reaction [(1-&gt;3)-beta-D-glucosyl](n) + UDP-alpha-D-glucose = [(1-&gt;3)-beta-D-glucosyl](n+1) + UDP + H(+). In terms of biological role, alternate catalytic subunit of the 1,3-beta-glucan synthase (GS) complex. Synthesizes 1,3-beta-glucan, a major structural component of the yeast cell wall. Involved in cell wall synthesis, maintenance and remodeling. The sequence is that of 1,3-beta-glucan synthase component FKS1 (FKS1) from Saccharomyces cerevisiae (strain ATCC 204508 / S288c) (Baker's yeast).